A 96-amino-acid chain; its full sequence is Large ribosomal subunit protein uL23 (96 aa).

This sequence belongs to the universal ribosomal protein uL23 family. In terms of assembly, part of the 50S ribosomal subunit. Contacts protein L29, and trigger factor when it is bound to the ribosome.

In terms of biological role, one of the early assembly proteins it binds 23S rRNA. One of the proteins that surrounds the polypeptide exit tunnel on the outside of the ribosome. Forms the main docking site for trigger factor binding to the ribosome. This Caldicellulosiruptor bescii (strain ATCC BAA-1888 / DSM 6725 / KCTC 15123 / Z-1320) (Anaerocellum thermophilum) protein is Large ribosomal subunit protein uL23.